The chain runs to 24 residues: Hemocyanin subunit 4e (24 aa).

This sequence belongs to the tyrosinase family. Hemocyanin subfamily. As to expression, hemolymph.

The protein resides in the secreted. The protein localises to the extracellular space. Hemocyanins are copper-containing oxygen carriers occurring freely dissolved in the hemolymph of many mollusks and arthropods. The polypeptide is Hemocyanin subunit 4e (Maja squinado (Mediterranean spider crab)).